The sequence spans 163 residues: NADPH-dependent 7-cyano-7-deazaguanine reductase (163 aa).

Residues 1-10 (MSKPPRRSPR) show a composition bias toward basic residues. The disordered stretch occupies residues 1-23 (MSKPPRRSPRKPTPASPELQLGH). Cys61 serves as the catalytic Thioimide intermediate. Residue Asp68 is the Proton donor of the active site. Substrate-binding positions include 83–85 (LES) and 102–103 (HE).

It belongs to the GTP cyclohydrolase I family. QueF type 1 subfamily.

The protein localises to the cytoplasm. It catalyses the reaction 7-aminomethyl-7-carbaguanine + 2 NADP(+) = 7-cyano-7-deazaguanine + 2 NADPH + 3 H(+). Its pathway is tRNA modification; tRNA-queuosine biosynthesis. Catalyzes the NADPH-dependent reduction of 7-cyano-7-deazaguanine (preQ0) to 7-aminomethyl-7-deazaguanine (preQ1). This Rhodopseudomonas palustris (strain BisA53) protein is NADPH-dependent 7-cyano-7-deazaguanine reductase.